Consider the following 41-residue polypeptide: uncharacterized protein (41 aa).

This is an uncharacterized protein from Treponema pallidum (strain Nichols).